A 441-amino-acid chain; its full sequence is ATP-dependent protease ATPase subunit HslU (441 aa).

ATP contacts are provided by residues Val18, Gly60–Glu65, Asp254, Glu319, and Arg391.

This sequence belongs to the ClpX chaperone family. HslU subfamily. A double ring-shaped homohexamer of HslV is capped on each side by a ring-shaped HslU homohexamer. The assembly of the HslU/HslV complex is dependent on binding of ATP.

Its subcellular location is the cytoplasm. Functionally, ATPase subunit of a proteasome-like degradation complex; this subunit has chaperone activity. The binding of ATP and its subsequent hydrolysis by HslU are essential for unfolding of protein substrates subsequently hydrolyzed by HslV. HslU recognizes the N-terminal part of its protein substrates and unfolds these before they are guided to HslV for hydrolysis. The polypeptide is ATP-dependent protease ATPase subunit HslU (Verminephrobacter eiseniae (strain EF01-2)).